The following is a 214-amino-acid chain: Large ribosomal subunit protein uL16 (214 aa).

Residue R32 is modified to Citrulline. K175 participates in a covalent cross-link: Glycyl lysine isopeptide (Lys-Gly) (interchain with G-Cter in SUMO2). Residue K188 forms a Glycyl lysine isopeptide (Lys-Gly) (interchain with G-Cter in ubiquitin) linkage.

This sequence belongs to the universal ribosomal protein uL16 family. Component of the large ribosomal subunit. Mature ribosomes consist of a small (40S) and a large (60S) subunit. The 40S subunit contains about 33 different proteins and 1 molecule of RNA (18S). The 60S subunit contains about 49 different proteins and 3 molecules of RNA (28S, 5.8S and 5S). Citrullinated by PADI4. In terms of processing, ufmylated by UFL1.

It is found in the cytoplasm. In terms of biological role, component of the large ribosomal subunit. Plays a role in the formation of actively translating ribosomes. May play a role in the embryonic brain development. This chain is Large ribosomal subunit protein uL16, found in Bos taurus (Bovine).